A 714-amino-acid chain; its full sequence is Phosphoribosylformylglycinamidine synthase subunit PurL (714 aa).

Histidine 34 is a catalytic residue. ATP is bound at residue tyrosine 37. Glutamate 78 serves as a coordination point for Mg(2+). Substrate is bound by residues 79-82 (SHNH) and arginine 101. The active-site Proton acceptor is the histidine 80. Residue aspartate 102 participates in Mg(2+) binding. A substrate-binding site is contributed by glutamine 226. A Mg(2+)-binding site is contributed by aspartate 254. Substrate is bound at residue 298–300 (ESQ). ATP is bound by residues aspartate 474 and glycine 511. Mg(2+) is bound at residue asparagine 512. Serine 514 provides a ligand contact to substrate.

The protein belongs to the FGAMS family. Monomer. Part of the FGAM synthase complex composed of 1 PurL, 1 PurQ and 2 PurS subunits.

The protein localises to the cytoplasm. It catalyses the reaction N(2)-formyl-N(1)-(5-phospho-beta-D-ribosyl)glycinamide + L-glutamine + ATP + H2O = 2-formamido-N(1)-(5-O-phospho-beta-D-ribosyl)acetamidine + L-glutamate + ADP + phosphate + H(+). Its pathway is purine metabolism; IMP biosynthesis via de novo pathway; 5-amino-1-(5-phospho-D-ribosyl)imidazole from N(2)-formyl-N(1)-(5-phospho-D-ribosyl)glycinamide: step 1/2. Part of the phosphoribosylformylglycinamidine synthase complex involved in the purines biosynthetic pathway. Catalyzes the ATP-dependent conversion of formylglycinamide ribonucleotide (FGAR) and glutamine to yield formylglycinamidine ribonucleotide (FGAM) and glutamate. The FGAM synthase complex is composed of three subunits. PurQ produces an ammonia molecule by converting glutamine to glutamate. PurL transfers the ammonia molecule to FGAR to form FGAM in an ATP-dependent manner. PurS interacts with PurQ and PurL and is thought to assist in the transfer of the ammonia molecule from PurQ to PurL. The sequence is that of Phosphoribosylformylglycinamidine synthase subunit PurL from Methanothermobacter marburgensis (strain ATCC BAA-927 / DSM 2133 / JCM 14651 / NBRC 100331 / OCM 82 / Marburg) (Methanobacterium thermoautotrophicum).